A 332-amino-acid chain; its full sequence is Ribosomal RNA small subunit methyltransferase H (332 aa).

Residues 36–38 (GGH), D61, F88, D114, and Q121 contribute to the S-adenosyl-L-methionine site.

This sequence belongs to the methyltransferase superfamily. RsmH family.

It localises to the cytoplasm. The enzyme catalyses cytidine(1402) in 16S rRNA + S-adenosyl-L-methionine = N(4)-methylcytidine(1402) in 16S rRNA + S-adenosyl-L-homocysteine + H(+). Functionally, specifically methylates the N4 position of cytidine in position 1402 (C1402) of 16S rRNA. The protein is Ribosomal RNA small subunit methyltransferase H of Pelodictyon phaeoclathratiforme (strain DSM 5477 / BU-1).